An 89-amino-acid chain; its full sequence is Small ribosomal subunit protein uS15 (89 aa).

The segment covering 1 to 10 has biased composition (polar residues); that stretch reads MAVTTDQKSQ. Residues 1 to 22 form a disordered region; that stretch reads MAVTTDQKSQVMRDYQRAAGDT.

It belongs to the universal ribosomal protein uS15 family. Part of the 30S ribosomal subunit. Forms a bridge to the 50S subunit in the 70S ribosome, contacting the 23S rRNA.

In terms of biological role, one of the primary rRNA binding proteins, it binds directly to 16S rRNA where it helps nucleate assembly of the platform of the 30S subunit by binding and bridging several RNA helices of the 16S rRNA. Its function is as follows. Forms an intersubunit bridge (bridge B4) with the 23S rRNA of the 50S subunit in the ribosome. The sequence is that of Small ribosomal subunit protein uS15 from Nitrosomonas europaea (strain ATCC 19718 / CIP 103999 / KCTC 2705 / NBRC 14298).